Consider the following 116-residue polypeptide: Cation channel sperm-associated auxiliary subunit TMEM262 (116 aa).

Residues 1 to 16 (MWLQDRIATFFFPKGM) lie on the Cytoplasmic side of the membrane. The chain crosses the membrane as a helical span at residues 17 to 38 (MLTTAALMLFFLHLGIFIRDVH). Residues 39–51 (NFCITYHYDHMSF) are Extracellular-facing. The chain crosses the membrane as a helical span at residues 52 to 72 (HYTVVLMFSQVISICWAAMGS). Over 73 to 84 (LYAEMTENKYVC) the chain is Cytoplasmic. Residues 85–107 (FSALTILMLNGAMFFNRLSLEFL) traverse the membrane as a helical segment. Over 108-116 (AIEYREEHH) the chain is Extracellular.

In terms of assembly, component of the CatSper complex or CatSpermasome composed of the core pore-forming members CATSPER1, CATSPER2, CATSPER3 and CATSPER4 as well as auxiliary members CATSPERB, CATSPERG, CATSPERD, CATSPERE, CATSPERZ, C2CD6/CATSPERT, TMEM249, TMEM262 and EFCAB9. HSPA1 may be an additional auxiliary complex member. The core complex members CATSPER1, CATSPER2, CATSPER3 and CATSPER4 form a heterotetrameric channel. The auxiliary CATSPERB, CATSPERG, CATSPERD and CATSPERE subunits form a pavilion-like structure over the pore which stabilizes the complex through interactions with CATSPER4, CATSPER3, CATSPER1 and CATSPER2 respectively. TMEM262/CATSPERH interacts with CATSPERB, further stabilizing the complex. C2CD6/CATSPERT interacts at least with CATSPERD and is required for targeting the CatSper complex in the flagellar membrane.

It is found in the cell projection. The protein localises to the cilium. The protein resides in the flagellum membrane. In terms of biological role, auxiliary component of the CatSper complex, a complex involved in sperm cell hyperactivation. The chain is Cation channel sperm-associated auxiliary subunit TMEM262 from Homo sapiens (Human).